Reading from the N-terminus, the 380-residue chain is uncharacterized protein (380 aa).

This is an uncharacterized protein from Methanocaldococcus jannaschii (strain ATCC 43067 / DSM 2661 / JAL-1 / JCM 10045 / NBRC 100440) (Methanococcus jannaschii).